We begin with the raw amino-acid sequence, 50 residues long: Protein PndA (50 aa).

The chain crosses the membrane as a helical span at residues 5-25 (TFLMMLIVVCVTILCFVWMVR).

It belongs to the Hok/Gef family.

Its subcellular location is the cell inner membrane. Its function is as follows. When overexpressed kill the cells from the inside by interfering with a vital function in the cell membrane. Functionally, toxic component of a type I toxin-antitoxin (TA) system. When expressed is involved in cellular Mg(2+) release and degradation of stable RNA. The protein is Protein PndA (pndA) of Escherichia coli.